A 195-amino-acid chain; its full sequence is Glycerol-3-phosphate acyltransferase 2 (195 aa).

The next 6 helical transmembrane spans lie at 4-24 (VVSL…VAGV), 52-72 (GAAA…VGLA), 73-93 (LWLA…GVVF), 115-135 (AMLV…LALI), 150-170 (AIPF…SRLG), and 171-191 (GGAE…HLLA).

This sequence belongs to the PlsY family. Probably interacts with PlsX.

It is found in the cell membrane. The enzyme catalyses an acyl phosphate + sn-glycerol 3-phosphate = a 1-acyl-sn-glycero-3-phosphate + phosphate. It participates in lipid metabolism; phospholipid metabolism. Its function is as follows. Catalyzes the transfer of an acyl group from acyl-phosphate (acyl-PO(4)) to glycerol-3-phosphate (G3P) to form lysophosphatidic acid (LPA). This enzyme utilizes acyl-phosphate as fatty acyl donor, but not acyl-CoA or acyl-ACP. The protein is Glycerol-3-phosphate acyltransferase 2 of Deinococcus radiodurans (strain ATCC 13939 / DSM 20539 / JCM 16871 / CCUG 27074 / LMG 4051 / NBRC 15346 / NCIMB 9279 / VKM B-1422 / R1).